Reading from the N-terminus, the 239-residue chain is Large ribosomal subunit protein uL2 (239 aa).

Disordered regions lie at residues 1–21 (MGKS…KSPS) and 203–239 (PFGG…GRRK). Over residues 222–239 (PPGRKVGHIAARRTGRRK) the composition is skewed to basic residues.

Belongs to the universal ribosomal protein uL2 family. In terms of assembly, part of the 50S ribosomal subunit. Forms a bridge to the 30S subunit in the 70S ribosome.

In terms of biological role, one of the primary rRNA binding proteins. Required for association of the 30S and 50S subunits to form the 70S ribosome, for tRNA binding and peptide bond formation. It has been suggested to have peptidyltransferase activity; this is somewhat controversial. Makes several contacts with the 16S rRNA in the 70S ribosome. The sequence is that of Large ribosomal subunit protein uL2 from Pyrococcus furiosus (strain ATCC 43587 / DSM 3638 / JCM 8422 / Vc1).